Reading from the N-terminus, the 445-residue chain is Enolase 2 (445 aa).

Positions 164 and 173 each coordinate substrate. The active-site Proton donor is Glu216. The Mg(2+) site is built by Asp251, Glu301, and Asp328. Substrate contacts are provided by Glu301 and Asp328. Lys353 (proton acceptor) is an active-site residue. Residues 380–383 and Lys404 contribute to the substrate site; that span reads SHRS.

It belongs to the enolase family. Homodimer. It depends on Mg(2+) as a cofactor.

The protein resides in the cytoplasm. It carries out the reaction (2R)-2-phosphoglycerate = phosphoenolpyruvate + H2O. It participates in carbohydrate degradation; glycolysis; pyruvate from D-glyceraldehyde 3-phosphate: step 4/5. The sequence is that of Enolase 2 (ENO2) from Hevea brasiliensis (Para rubber tree).